We begin with the raw amino-acid sequence, 219 residues long: Oligoribonuclease (219 aa).

The 166-residue stretch at 19–184 (LVWVDLEMTG…ADIVESIREL (166 aa)) folds into the Exonuclease domain. Residue Tyr-141 is part of the active site.

The protein belongs to the oligoribonuclease family.

Its subcellular location is the cytoplasm. In terms of biological role, 3'-to-5' exoribonuclease specific for small oligoribonucleotides. The polypeptide is Oligoribonuclease (Corynebacterium glutamicum (strain R)).